The primary structure comprises 490 residues: Betaine aldehyde dehydrogenase (490 aa).

Positions 27 and 93 each coordinate K(+). 150–152 (GAW) contacts NAD(+). The Charge relay system role is filled by Lys162. Residue 176-179 (KPSE) coordinates NAD(+). A K(+)-binding site is contributed by Val180. 230–233 (GTDT) provides a ligand contact to NAD(+). Leu246 lines the K(+) pocket. The active-site Proton acceptor is Glu252. Residues Gly254, Cys286, and Glu387 each contribute to the NAD(+) site. Cys286 (nucleophile) is an active-site residue. The residue at position 286 (Cys286) is a Cysteine sulfenic acid (-SOH). Residues Lys457 and Gly460 each coordinate K(+). The Charge relay system role is filled by Glu464.

It belongs to the aldehyde dehydrogenase family. Dimer of dimers. K(+) serves as cofactor.

The catalysed reaction is betaine aldehyde + NAD(+) + H2O = glycine betaine + NADH + 2 H(+). The protein operates within amine and polyamine biosynthesis; betaine biosynthesis via choline pathway; betaine from betaine aldehyde: step 1/1. Functionally, involved in the biosynthesis of the osmoprotectant glycine betaine. Catalyzes the irreversible oxidation of betaine aldehyde to the corresponding acid. The chain is Betaine aldehyde dehydrogenase from Pseudomonas syringae pv. syringae (strain B728a).